The sequence spans 377 residues: Phospho-N-acetylmuramoyl-pentapeptide-transferase (377 aa).

10 helical membrane-spanning segments follow: residues 2-22, 55-75, 82-102, 122-142, 162-182, 195-215, 236-256, 263-283, 288-308, and 343-363; these read IQLL…TPAL, VAIL…SVLA, ITLS…VGFL, MVLQ…FPDA, LAFA…NLIA, LDGL…LITL, PMDL…FLWW, IFMG…FAVL, LLLV…ILQV, and FWVI…GDWL.

This sequence belongs to the glycosyltransferase 4 family. MraY subfamily. Mg(2+) serves as cofactor.

Its subcellular location is the cell membrane. It carries out the reaction UDP-N-acetyl-alpha-D-muramoyl-L-alanyl-gamma-D-glutamyl-meso-2,6-diaminopimeloyl-D-alanyl-D-alanine + di-trans,octa-cis-undecaprenyl phosphate = di-trans,octa-cis-undecaprenyl diphospho-N-acetyl-alpha-D-muramoyl-L-alanyl-D-glutamyl-meso-2,6-diaminopimeloyl-D-alanyl-D-alanine + UMP. Its pathway is cell wall biogenesis; peptidoglycan biosynthesis. Catalyzes the initial step of the lipid cycle reactions in the biosynthesis of the cell wall peptidoglycan: transfers peptidoglycan precursor phospho-MurNAc-pentapeptide from UDP-MurNAc-pentapeptide onto the lipid carrier undecaprenyl phosphate, yielding undecaprenyl-pyrophosphoryl-MurNAc-pentapeptide, known as lipid I. The polypeptide is Phospho-N-acetylmuramoyl-pentapeptide-transferase (Kocuria rhizophila (strain ATCC 9341 / DSM 348 / NBRC 103217 / DC2201)).